We begin with the raw amino-acid sequence, 232 residues long: Cytidylate kinase (232 aa).

10 to 18 (GPAASGKST) contributes to the ATP binding site.

The protein belongs to the cytidylate kinase family. Type 1 subfamily.

It localises to the cytoplasm. It carries out the reaction CMP + ATP = CDP + ADP. The catalysed reaction is dCMP + ATP = dCDP + ADP. This Phytoplasma mali (strain AT) protein is Cytidylate kinase.